The chain runs to 397 residues: Acetate kinase (397 aa).

Asn-8 contacts Mg(2+). Residue Lys-15 coordinates ATP. A substrate-binding site is contributed by Arg-89. Catalysis depends on Asp-146, which acts as the Proton donor/acceptor. Residues 206-210 (HVGNG), 283-285 (DMR), and 331-335 (GMGEN) contribute to the ATP site. Glu-383 provides a ligand contact to Mg(2+).

This sequence belongs to the acetokinase family. Homodimer. The cofactor is Mg(2+). Mn(2+) serves as cofactor.

The protein resides in the cytoplasm. The catalysed reaction is acetate + ATP = acetyl phosphate + ADP. It participates in metabolic intermediate biosynthesis; acetyl-CoA biosynthesis; acetyl-CoA from acetate: step 1/2. In terms of biological role, catalyzes the formation of acetyl phosphate from acetate and ATP. Can also catalyze the reverse reaction. The protein is Acetate kinase of Streptococcus agalactiae serotype III (strain NEM316).